Here is a 422-residue protein sequence, read N- to C-terminus: Inner membrane ALBINO3-like protein 2, chloroplastic (422 aa).

The segment covering 1–10 (MALQMKQSPS) has biased composition (polar residues). Positions 1 to 22 (MALQMKQSPSMGVRRASQPVLP) are disordered. Residues 65-85 (LYTLAEGGPIDVLAQFFEFVL) traverse the membrane as a helical segment. Topologically, residues 86 to 96 (QTLDEGLESAK) are stromal. The helical transmembrane segment at 97 to 117 (IPYSYGFAIIALTVLVKVATF) threads the bilayer. The Lumenal segment spans residues 118–166 (PLTQKQVESTLSLQALQPRVKELQAKYADDPENLQLETARLYKEAGVNP). The helical transmembrane segment at 167 to 187 (LAGCFPTLATIPVFIGLYNAL) threads the bilayer. Topologically, residues 188 to 225 (SNAAKEGLLTEGFFWIPSLGGPTTIGGGLEWLVPFENG) are stromal. A helical membrane pass occupies residues 226-246 (APPVGWANAAAYLVMPVLLVA). At 247 to 275 (SQYASQKIISSQNNQDPSQQQAQAILKFL) the chain is on the lumenal side. Residues 276–296 (PLMIGWFSLNVPSGLTLYWFV) form a helical membrane-spanning segment. Topologically, residues 297–422 (NNLLSTGQQL…GSEEGKDNSA (126 aa)) are stromal. Residues 325–422 (TAGSSTPIVK…GSEEGKDNSA (98 aa)) form a disordered region. Over residues 334–350 (KPKEERVKKVTGKELGS) the composition is skewed to basic and acidic residues. Acidic residues predominate over residues 358-367 (DGEEVEDVEV). The span at 368–380 (EVVSSGSSSSSGS) shows a compositional bias: low complexity. Over residues 386–400 (RKGEKFRALKAREAA) the composition is skewed to basic and acidic residues.

This sequence belongs to the OXA1/ALB3/YidC (TC 2.A.9.2) family.

The protein resides in the plastid. It is found in the chloroplast thylakoid membrane. In terms of biological role, required for the insertion of some light-harvesting complexes (LHC) proteins into the chloroplast thylakoid membrane. Essential for the assembly and activity of LHC I and II. Its function is probably partly distinct from that of ALB3.1. In Chlamydomonas reinhardtii (Chlamydomonas smithii), this protein is Inner membrane ALBINO3-like protein 2, chloroplastic (ALB3.2).